A 383-amino-acid polypeptide reads, in one-letter code: S-adenosylmethionine synthase (383 aa).

H22 serves as a coordination point for ATP. D24 lines the Mg(2+) pocket. Residue E50 coordinates K(+). 2 residues coordinate L-methionine: E63 and Q99. The flexible loop stretch occupies residues 99–109 (QSSEINQAVQS). Residues 160–162 (DMK), D235, 241–242 (RK), S258, and K262 each bind ATP. D235 is a binding site for L-methionine. Position 266 (K266) interacts with L-methionine.

This sequence belongs to the AdoMet synthase family. Homotetramer; dimer of dimers. Mg(2+) is required as a cofactor. The cofactor is K(+).

It is found in the cytoplasm. The enzyme catalyses L-methionine + ATP + H2O = S-adenosyl-L-methionine + phosphate + diphosphate. It functions in the pathway amino-acid biosynthesis; S-adenosyl-L-methionine biosynthesis; S-adenosyl-L-methionine from L-methionine: step 1/1. In terms of biological role, catalyzes the formation of S-adenosylmethionine (AdoMet) from methionine and ATP. The overall synthetic reaction is composed of two sequential steps, AdoMet formation and the subsequent tripolyphosphate hydrolysis which occurs prior to release of AdoMet from the enzyme. The chain is S-adenosylmethionine synthase from Mycoplasma pneumoniae (strain ATCC 29342 / M129 / Subtype 1) (Mycoplasmoides pneumoniae).